We begin with the raw amino-acid sequence, 319 residues long: Protein quaking-B (319 aa).

The region spanning 87 to 153 is the KH domain; the sequence is YVPVKEYPDF…WEHLNEDLHV (67 aa). Positions 276–279 match the SH3-binding motif; it reads PQTP.

This sequence belongs to the quaking family. As to quaternary structure, homodimer; does not require RNA to homodimerize.

It localises to the cytoplasm. It is found in the nucleus. RNA reader protein, which recognizes and binds specific RNAs, thereby regulating RNA metabolic processes, such as pre-mRNA splicing, circular RNA (circRNA) formation, mRNA export, mRNA stability and/or translation. Involved in various cellular processes, such as mRNA storage into stress granules, apoptosis, interferon response, glial cell fate and development. Binds to the 5'-NACUAAY-N(1,20)-UAAY-3' RNA core sequence. Acts as a mRNA modification reader that specifically recognizes and binds mRNA transcripts modified by internal N(7)-methylguanine (m7G). Promotes the formation of circular RNAs (circRNAs): acts by binding to sites flanking circRNA-forming exons. CircRNAs are produced by back-splicing circularization of pre-mRNAs. Required to protect and promote stability of mRNAs which promotes oligodendrocyte differentiation. Acts as an important regulator of muscle development: required during early skeletal myofibril formation by regulating the accumulation of the muscle-specific tropomyosin-3 (tpm3) transcripts. The sequence is that of Protein quaking-B (qki2) from Danio rerio (Zebrafish).